The primary structure comprises 157 residues: Transcriptional repressor NrdR (157 aa).

The interval 1–22 (MKCPYCSSPDSRVINSRPSDDG) is disordered. A zinc finger lies at 3–34 (CPYCSSPDSRVINSRPSDDGASIRRRRECLTC). Polar residues predominate over residues 8 to 17 (SPDSRVINSR). The ATP-cone domain occupies 49–136 (LMVVKRSGVR…VYRDFDSLER (88 aa)).

Belongs to the NrdR family. Zn(2+) is required as a cofactor.

In terms of biological role, negatively regulates transcription of bacterial ribonucleotide reductase nrd genes and operons by binding to NrdR-boxes. The chain is Transcriptional repressor NrdR from Deinococcus radiodurans (strain ATCC 13939 / DSM 20539 / JCM 16871 / CCUG 27074 / LMG 4051 / NBRC 15346 / NCIMB 9279 / VKM B-1422 / R1).